The chain runs to 238 residues: Uridylate kinase (238 aa).

12–15 contributes to the ATP binding site; the sequence is KLSG. The tract at residues 20-25 is involved in allosteric activation by GTP; the sequence is GEKGFG. Position 54 (Gly54) interacts with UMP. ATP-binding residues include Gly55 and Arg59. UMP contacts are provided by residues Asp72 and 133 to 140; that span reads TGNPYFST. Positions 166 and 169 each coordinate ATP.

Belongs to the UMP kinase family. In terms of assembly, homohexamer.

Its subcellular location is the cytoplasm. The catalysed reaction is UMP + ATP = UDP + ADP. The protein operates within pyrimidine metabolism; CTP biosynthesis via de novo pathway; UDP from UMP (UMPK route): step 1/1. With respect to regulation, allosterically activated by GTP. Inhibited by UTP. Catalyzes the reversible phosphorylation of UMP to UDP. The sequence is that of Uridylate kinase from Clostridium botulinum (strain Hall / ATCC 3502 / NCTC 13319 / Type A).